Consider the following 277-residue polypeptide: MAGEVEFKGKGQALRLGIQQELGGGPLSIFGAAAQKHDLSIREVTAGVLTKLAEDFPNLEFQLRTSLTKKAINEKLRSFDPRLGQALFVESASIRPDGGITEVKDRHGNWRVILVGESKHQGNDVEKILAGVLQGKAKDQDFMAAGNAIERMHKNVLELRNYMLDEKHFPYVVFLQGSNFATESFEVTRPDGRVVKIVHDSGMLNRIDRVTASSLSREINQNYCENIVVRAGSFDHMFQIASLYCKAAPWTAGEMAEAMLAVAKTSLRIIADDLDQN.

The protein belongs to the EcoRI type II restriction endonuclease family. As to quaternary structure, homodimer. The cofactor is Mg(2+).

The catalysed reaction is Endonucleolytic cleavage of DNA to give specific double-stranded fragments with terminal 5'-phosphates.. Functionally, a P subtype restriction enzyme that recognizes the double-stranded sequence 5'-GAATTC-3' and cleaves after G-1. The sequence is that of Type II restriction enzyme RsrI (rsrIR) from Cereibacter sphaeroides (Rhodobacter sphaeroides).